A 254-amino-acid chain; its full sequence is Dihydroorotate dehydrogenase B (NAD(+)), electron transfer subunit (254 aa).

The FAD-binding FR-type domain maps to 1–99 (MLQTEMKVIQ…LGPLGKGFDI (99 aa)). FAD contacts are provided by residues 50 to 53 (RPIS), 67 to 69 (LYR), and 74 to 75 (GT). Cys218, Cys223, Cys226, and Cys241 together coordinate [2Fe-2S] cluster.

It belongs to the PyrK family. In terms of assembly, heterotetramer of 2 PyrK and 2 PyrD type B subunits. [2Fe-2S] cluster serves as cofactor. It depends on FAD as a cofactor.

The protein operates within pyrimidine metabolism; UMP biosynthesis via de novo pathway; orotate from (S)-dihydroorotate (NAD(+) route): step 1/1. Responsible for channeling the electrons from the oxidation of dihydroorotate from the FMN redox center in the PyrD type B subunit to the ultimate electron acceptor NAD(+). This chain is Dihydroorotate dehydrogenase B (NAD(+)), electron transfer subunit, found in Listeria monocytogenes serotype 4b (strain F2365).